We begin with the raw amino-acid sequence, 375 residues long: MQCAQYTASRCRSCQWLDKPYPQQLADKQNHLENLLSDHRVTQWLSPLFGQESAFRNKAKMVVSGSVERPLLGMLHRDGTPVDLCECPLYPTSFAPVFAVLKTFIARAGLTPYNVARKRGELKFLLLTESTYSGELMLRFVLRSQTKLSQLQAALPWLQQQLPQLAVISVNIQPVHMAILEGEQEMPLTEQQALPEIFNQVPLFIRPQSFFQTNPQVAASLYATARQWVRELKIDSMWDLFCGVGGFGLHCADTETRLTGIEISAEAIACARQSADQLGLKNVTFAALDSTQFATAETQVPQLVLVNPPRRGIGAQLCEYLSQMAPQFILYSSCNAETMAKDISLLADYRIERVQLFDMFPHTAHYEVLSLLIKC.

Positions 3, 11, 14, and 87 each coordinate [4Fe-4S] cluster. Q212, F241, E262, and N307 together coordinate S-adenosyl-L-methionine. The Nucleophile role is filled by C334.

The protein belongs to the class I-like SAM-binding methyltransferase superfamily. RNA M5U methyltransferase family. RlmC subfamily.

It carries out the reaction uridine(747) in 23S rRNA + S-adenosyl-L-methionine = 5-methyluridine(747) in 23S rRNA + S-adenosyl-L-homocysteine + H(+). Its function is as follows. Catalyzes the formation of 5-methyl-uridine at position 747 (m5U747) in 23S rRNA. The chain is 23S rRNA (uracil(747)-C(5))-methyltransferase RlmC from Yersinia enterocolitica serotype O:8 / biotype 1B (strain NCTC 13174 / 8081).